A 256-amino-acid polypeptide reads, in one-letter code: Phosphomannomutase (256 aa).

Residue Asp12 is the Nucleophile of the active site. The Mg(2+) site is built by Asp12 and Asp14. Asp14 acts as the Proton donor/acceptor in catalysis. Arg21, Arg123, Arg134, Arg141, Ser179, and Asp181 together coordinate alpha-D-mannose 1-phosphate. Asp209 is a Mg(2+) binding site.

The protein belongs to the eukaryotic PMM family. In terms of assembly, homodimer.

The protein resides in the cytoplasm. The catalysed reaction is alpha-D-mannose 1-phosphate = D-mannose 6-phosphate. Its pathway is nucleotide-sugar biosynthesis; GDP-alpha-D-mannose biosynthesis; alpha-D-mannose 1-phosphate from D-fructose 6-phosphate: step 2/2. In terms of biological role, involved in the synthesis of the GDP-mannose and dolichol-phosphate-mannose required for a number of critical mannosyl transfer reactions. This chain is Phosphomannomutase (SEC53), found in Encephalitozoon cuniculi (strain GB-M1) (Microsporidian parasite).